Consider the following 131-residue polypeptide: MATVPTRSGSPRQLTTKQTGDTWEVQARRWLEGKGLRFVAANVNERGGEIDLIMREGRTTVFVEVRYRRSALYGGAAASVTRSKQHKLLQTARLWLARHNGSFDTVDCRFDVVAFTGNEVEWIKDAFNDHS.

The tract at residues 1-20 is disordered; the sequence is MATVPTRSGSPRQLTTKQTG.

It belongs to the UPF0102 family.

This Escherichia coli O139:H28 (strain E24377A / ETEC) protein is UPF0102 protein YraN.